The following is a 449-amino-acid chain: Na(+)-translocating NADH-quinone reductase subunit A (449 aa).

This sequence belongs to the NqrA family. In terms of assembly, composed of six subunits; NqrA, NqrB, NqrC, NqrD, NqrE and NqrF.

It catalyses the reaction a ubiquinone + n Na(+)(in) + NADH + H(+) = a ubiquinol + n Na(+)(out) + NAD(+). Functionally, NQR complex catalyzes the reduction of ubiquinone-1 to ubiquinol by two successive reactions, coupled with the transport of Na(+) ions from the cytoplasm to the periplasm. NqrA to NqrE are probably involved in the second step, the conversion of ubisemiquinone to ubiquinol. In Actinobacillus pleuropneumoniae serotype 5b (strain L20), this protein is Na(+)-translocating NADH-quinone reductase subunit A.